Consider the following 354-residue polypeptide: Phenylalanine 4-monooxygenase, chloroplastic (354 aa).

Residues 1–60 constitute a chloroplast transit peptide; it reads MAFPLQKTFLCSNGQSFPCSNGRSTSTLLASDLKFQRLNKPFILRVGSMQIRNSPKEHPR. Residues histidine 229, histidine 234, and glutamate 274 each coordinate Fe cation.

It belongs to the biopterin-dependent aromatic amino acid hydroxylase family. As to quaternary structure, forms monomers. The cofactor is Fe(2+).

The protein localises to the plastid. Its subcellular location is the chloroplast. It catalyses the reaction (6R)-L-erythro-5,6,7,8-tetrahydrobiopterin + L-phenylalanine + O2 = (4aS,6R)-4a-hydroxy-L-erythro-5,6,7,8-tetrahydrobiopterin + L-tyrosine. Its function is as follows. Catalyzes the hydroxylation of L-phenylalanine to L-tyrosine. Does not seem to be tetrahydropterin-dependent and shows preference for 10-formyltetrahydrofolate as cosubstrate and electron donor. The polypeptide is Phenylalanine 4-monooxygenase, chloroplastic (Pinus taeda (Loblolly pine)).